Consider the following 636-residue polypeptide: MTRRWSFLVQCFTFKKKEGVRSRYMSDYNYVEVLQKSILFYEAQRSGKLPESNRLNWRGDSGLEDGKDVGHDLTGGWYDAGDHVKFGLPMAYSAAVLAWTVYEYREAYEEAELLDDMLDQIKWATDYFLKAHTGPNEFWAQVGDGNADHGWWGPAEVMPMNRPAFKIDEHCPGTEVAAQTAAALAAGSIIFKETDAPYAAKLLTHAKQLYAFADQYRGEYTDCVTNAQPFYNSWSGYIDELIWGGIWLYLATNDQTYLNKALKAVEEWPKDWDYTFTMSWDNTFFLSQILLARITKEKRFIESTERNLDYWSTGFVQNGKVERITYTPGGLAWLDQWGSLRYTANAAFLAFVYADWVSDQEKKNRYQTFAIRQTHYMLGDNPQNRSYVVGFGKNPPMHPHHRTAHGSWSNQLTTPSSHRHTLYGPLVGGPNRQDQYTDDISDYVSNEVATDYNAAFTGNGAAVWSGQSKLPNFPPKEKVEDEFFVEAAVMSNDTTSTQIKAILYNRSGWPARSSQSLSFRYYVNLSEIFAKGFTDKDIQVTAVYNEGASLSPLTVYDASSHIYFTEIDFTGVAIFPGGESLHKKEIQFRLSAPNGANIWDASNDYSFQGLTSNMQKTARIPVFDQGDLVFGTLPNK.

A signal peptide spans 1 to 25 (MTRRWSFLVQCFTFKKKEGVRSRYM). Residue Asp-82 is the Nucleophile of the active site. Residues His-400, Asp-438, and Glu-447 contribute to the active site. The 158-residue stretch at 478–635 (KVEDEFFVEA…GDLVFGTLPN (158 aa)) folds into the CBM3 domain.

This sequence belongs to the glycosyl hydrolase 9 (cellulase E) family.

It is found in the secreted. It carries out the reaction Endohydrolysis of (1-&gt;4)-beta-D-glucosidic linkages in cellulose, lichenin and cereal beta-D-glucans.. The protein is Endoglucanase 4 of Bacillus sp. (strain KSM-522).